The chain runs to 417 residues: Serine protease hepsin (417 aa).

The Cytoplasmic portion of the chain corresponds to 1–23 (MAQKEGGRTVPCCSRPKVAALTA). Residues 24 to 44 (GTLLLLTAIGAASWAIVAVLL) form a helical; Signal-anchor for type II membrane protein membrane-spanning segment. Over 45 to 417 (RSDQEPLYPV…SEASGMVTQL (373 aa)) the chain is Extracellular. The SRCR domain occupies 54–151 (VQVSSADARL…RGRFLATICQ (98 aa)). Cystine bridges form between Cys77–Cys140, Cys90–Cys150, Cys119–Cys138, Cys153–Cys277, Cys188–Cys204, Cys291–Cys359, Cys322–Cys338, and Cys349–Cys381. Residue Asn112 is glycosylated (N-linked (GlcNAc...) asparagine). Residues 163-405 (IVGGRDTSLG…FREWIFQAIK (243 aa)) enclose the Peptidase S1 domain. Residues His203 and Asp257 each act as charge relay system in the active site. The active-site Charge relay system is the Ser353.

The protein belongs to the peptidase S1 family.

Its subcellular location is the membrane. It carries out the reaction Cleavage after basic amino-acid residues, with Arg strongly preferred to Lys.. Plays an essential role in cell growth and maintenance of cell morphology. May mediate the activating cleavage of HGF and MST1/HGFL. Plays a role in the proteolytic processing of ACE2. In Pongo abelii (Sumatran orangutan), this protein is Serine protease hepsin (HPN).